We begin with the raw amino-acid sequence, 180 residues long: Ribulose bisphosphate carboxylase small subunit, chloroplastic (180 aa).

A chloroplast-targeting transit peptide spans 1–56 (MALISSAAVTTVNRASSAQANLVAPFTGLKSSAGFPVTKKTNNDITSIASNGGRVN).

The protein belongs to the RuBisCO small chain family. Heterohexadecamer of 8 large and 8 small subunits.

It localises to the plastid. It is found in the chloroplast. Functionally, ruBisCO catalyzes two reactions: the carboxylation of D-ribulose 1,5-bisphosphate, the primary event in carbon dioxide fixation, as well as the oxidative fragmentation of the pentose substrate. Both reactions occur simultaneously and in competition at the same active site. Although the small subunit is not catalytic it is essential for maximal activity. The protein is Ribulose bisphosphate carboxylase small subunit, chloroplastic of Medicago sativa (Alfalfa).